The following is a 486-amino-acid chain: Elastin-binding protein EbpS (486 aa).

Basic and acidic residues predominate over residues 1–40 (MSNNFKDDFEKNRQSIDTNSHQDHTEDVEKDQSELEHQDT). Residues 1–314 (MSNNFKDDFE…NHDRDKERKK (314 aa)) form a disordered region. The Extracellular segment spans residues 2–204 (SNNFKDDFEK…EPKEHHNGKK (203 aa)). Residues 14–34 (QSIDTNSHQDHTEDVEKDQSE) are elastin-binding. Residues 64 to 85 (TNHNKQVHNESQTSEDNVQNEA) are compositionally biased toward polar residues. Composition is skewed to basic and acidic residues over residues 103–118 (EPSH…EEYY) and 126–143 (DKSH…DTIK). Over residues 161-179 (EQSQQPKPYFTTGANQSET) the composition is skewed to polar residues. Basic and acidic residues predominate over residues 180–199 (SKNEHDNDSVKQDQDEPKEH). The segment covering 204-225 (KAAAIGAGTAGVAGAAGAMAAS) has biased composition (low complexity). Residues 205 to 225 (AAAIGAGTAGVAGAAGAMAAS) traverse the membrane as a helical segment. Residues 226–319 (KAKKHSNDAQ…KERKKGGMAK (94 aa)) lie on the Cytoplasmic side of the membrane. Residues 233–246 (DAQNKSNSGKANNS) show a composition bias toward polar residues. The segment covering 247–259 (TEDKASQDKSKDH) has biased composition (basic and acidic residues). Positions 278 to 297 (GAASKSASAASKPHASNNAS) are enriched in low complexity. Residues 299-314 (NHDEHDNHDRDKERKK) are compositionally biased toward basic and acidic residues. Residues 320–340 (VLLPLIAAVLIIGALAIFGGM) form a helical membrane-spanning segment. Residues 341 to 486 (ALNNHNNGTK…IRNGQQIVIP (146 aa)) are Extracellular-facing. The interval 351 to 440 (ENKIANTNKN…QRQGGGQRHT (90 aa)) is disordered. The segment covering 361-398 (NADESKDKDTSKDASKDKSKSTDSDKSKEDQDKATKDE) has biased composition (basic and acidic residues). Low complexity predominate over residues 403-431 (QNNANQANNQAQNNQNQQQANQNQQQQQQ). Residues 437-485 (QRHTVNGQENLYRIAIQYYGSGSPENVEKIRRANGLSGNNIRNGQQIVI) form the LysM domain.

The protein localises to the cell membrane. Functionally, promotes binding of soluble elastin peptides and tropoelastin to S.aureus cells although it is not able to promote bacterial adherence to immobilized elastin and, therefore, is not a microbial surface component recognizing adhesive matrix molecule (MSCRAMM). The polypeptide is Elastin-binding protein EbpS (ebpS) (Staphylococcus aureus (strain USA300)).